A 506-amino-acid polypeptide reads, in one-letter code: MKEYRVYLERARSRQQDFLYPLIFREYIYGLAYSHNFNRSIFVENGGYDNKYSLLNVKRLITRMYQQNHLIISTNDSNKNPFLVYNKNFYSQIISEGFAIVVEIPFFLQLSSSLEEAEIIKSYKNVRSIHSIFPFLEDKFTYLNYVSDIRIPYPIHLEILVQILRYWVKDVPFFHLLRXFLYDFCNWNCFTSTKKSISTFSKSNPRLFLFLYNFYVCEYESIFLFLRNKSSHLRLKSFSVFFERIFFYAKRKHLVEVFSKDFSYTLPFFKDPNIHYVRYQGKCILASKNVPFLMNKWKHYFIHLWQCFFDVWSQPRTIDINQLSEHSFQLLGYFSNVRLNRSVVRSQMLENTFLIEIVSKKLDIIVPIIPLIRSLAKAKFCNVLGHPISKPVWADSSDFDIIERFLRICRNLSHYYNGSSKKKSLYRIKYILRLSCIKTLACKHKSTVRAFLKRSGSEELLEEFFTEEEEILSLIFPRDSFTLHRFHRNRIWYLDILFSNDLVNDE.

It belongs to the intron maturase 2 family. MatK subfamily.

The protein localises to the plastid. Its subcellular location is the chloroplast. Its function is as follows. Usually encoded in the trnK tRNA gene intron. Probably assists in splicing its own and other chloroplast group II introns. The protein is Maturase K of Trifolium fragiferum (Strawberry clover).